A 132-amino-acid polypeptide reads, in one-letter code: Large ribosomal subunit protein eL28 (132 aa).

Belongs to the eukaryotic ribosomal protein eL28 family.

The chain is Large ribosomal subunit protein eL28 (rpl28) from Dictyostelium discoideum (Social amoeba).